Here is a 178-residue protein sequence, read N- to C-terminus: Large ribosomal subunit protein uL5 (178 aa).

Belongs to the universal ribosomal protein uL5 family. Part of the 50S ribosomal subunit; part of the 5S rRNA/L5/L18/L25 subcomplex. Contacts the 5S rRNA and the P site tRNA. Forms a bridge to the 30S subunit in the 70S ribosome.

In terms of biological role, this is one of the proteins that bind and probably mediate the attachment of the 5S RNA into the large ribosomal subunit, where it forms part of the central protuberance. In the 70S ribosome it contacts protein S13 of the 30S subunit (bridge B1b), connecting the 2 subunits; this bridge is implicated in subunit movement. Contacts the P site tRNA; the 5S rRNA and some of its associated proteins might help stabilize positioning of ribosome-bound tRNAs. This chain is Large ribosomal subunit protein uL5, found in Psychrobacter arcticus (strain DSM 17307 / VKM B-2377 / 273-4).